Consider the following 245-residue polypeptide: Phycocyanobilin:ferredoxin oxidoreductase (245 aa).

This sequence belongs to the HY2 family.

It carries out the reaction (2R,3Z)-phycocyanobilin + 4 oxidized [2Fe-2S]-[ferredoxin] = biliverdin IXalpha + 4 reduced [2Fe-2S]-[ferredoxin] + 4 H(+). Its function is as follows. Catalyzes the four-electron reduction of biliverdin IX-alpha (2-electron reduction at both the A and D rings); the reaction proceeds via an isolatable 2-electron intermediate, 181,182-dihydrobiliverdin. This chain is Phycocyanobilin:ferredoxin oxidoreductase, found in Gloeothece citriformis (strain PCC 7424) (Cyanothece sp. (strain PCC 7424)).